Reading from the N-terminus, the 179-residue chain is UPF0227 protein VIBHAR_01524 (179 aa).

This sequence belongs to the UPF0227 family.

The chain is UPF0227 protein VIBHAR_01524 from Vibrio campbellii (strain ATCC BAA-1116).